The chain runs to 4377 residues: Ankyrin-3 (4377 aa).

Residues 1–44 (MAHAASQLKKNRDLEINAEEEPEKKRKHRKRSRDRKKKSDANAS) form a disordered region. A compositionally biased stretch (basic residues) spans 25–38 (KRKHRKRSRDRKKK). At serine 39 the chain carries Phosphoserine. ANK repeat units lie at residues 73-102 (NGLN…NVDA), 106-135 (KGNT…NVNA), 139-168 (NGFT…SQSL), 172-201 (DGFT…KGKV), 203-230 (LPAL…NADV), 234-263 (SGFT…AVDF), 267-296 (NDIT…KIDA), 300-329 (DGLT…PILS), 333-362 (NGLS…PVDD), 366-395 (DYLT…NPNA), 399-428 (NGFT…SIQA), 432-461 (SGLT…SPNT), 465-494 (RGET…QVEA), 498-527 (DDQT…SPNA), 531-560 (SGYT…SLSI), 564-593 (KGFT…SPDA), 597-626 (SGLT…SPHA), 630-659 (NGYT…DANA), 663-692 (QGIA…NVNL), 696-725 (SGLT…HVDA), 729-758 (MGYT…KVNA), 762-791 (NGYT…SPNE), and 795-825 (NGNT…TMTT). Threonine 468 carries the phosphoserine modification. A Phosphoserine modification is found at serine 623. Residues threonine 765 and glutamate 791 each carry the phosphoserine modification. 9 positions are modified to phosphoserine: serine 847, serine 861, serine 867, serine 913, serine 916, serine 922, serine 957, serine 959, and serine 1113. 2 consecutive ZU5 domains span residues 984-1139 (FLVS…VVSR) and 1141-1288 (KQES…LADC). Positions 1273–1407 (VSFTTNVSAR…SIKIRDTSQE (135 aa)) are UPA domain. Phosphoserine occurs at positions 1445, 1459, and 1470. Over residues 1519 to 1539 (SGFTSLSSSSSNTPSASPLKS) the composition is skewed to low complexity. A disordered region spans residues 1519–1540 (SGFTSLSSSSSNTPSASPLKSI). Serine 1622, serine 1625, serine 1632, isoleucine 1651, leucine 1658, serine 1984, serine 2111, serine 2123, and serine 2126 each carry phosphoserine. Disordered regions lie at residues 1968-1987 (VDNK…SPED), 2107-2159 (TILE…VPIP), 2176-2245 (YDPS…EETH), 2299-2322 (AVSP…DNQM), 2383-2433 (FPCS…ISDD), 2474-2508 (DVSH…KIAT), 2588-2751 (LTEV…VKKI), 2795-2824 (QSNE…MPDS), 3036-3067 (PPLE…DVFD), 3131-3272 (TFYT…KKHH), 3298-3516 (PVIR…SVFP), 3538-3607 (KGLD…HEGK), 3635-3718 (GEHT…DPKL), 3868-3897 (KATS…QSEK), and 4019-4090 (KKMQ…CERT). Over residues 1977–1986 (PKSDKGHSPE) the composition is skewed to basic and acidic residues. Residues 2115–2136 (FSQHDQDKSPLSDSGFETRSEK) are compositionally biased toward basic and acidic residues. The span at 2137-2146 (TPSAPQSAES) shows a compositional bias: polar residues. Over residues 2299-2308 (AVSPDVHKSA) the composition is skewed to basic and acidic residues. Residues 2390–2399 (GQQEEEELTA) are compositionally biased toward acidic residues. Over residues 2407–2417 (LESSRVNTPVS) the composition is skewed to polar residues. Basic and acidic residues-rich tracts occupy residues 2497-2508 (GSDKRSREKIAT) and 2588-2612 (LTEV…PEKK). Residues 2622–2631 (SSQSPTSSSP) are compositionally biased toward low complexity. A compositionally biased stretch (polar residues) spans 2706 to 2716 (SGFQLKQSKLS). Over residues 2720 to 2742 (LKFEQGTHAKSKDMSQEDRKSDG) the composition is skewed to basic and acidic residues. A compositionally biased stretch (polar residues) spans 2796–2807 (SNEIVVNDSGSD). 2 stretches are compositionally biased toward polar residues: residues 3154-3186 (EQVS…SKTP) and 3214-3224 (KSTSLKQTTVE). 2 stretches are compositionally biased toward basic and acidic residues: residues 3227–3242 (AVER…DSNQ) and 3335–3361 (KLKE…KELE). Polar residues predominate over residues 3377 to 3402 (SPQNEIAQNGNNDQSITECSIATTAE). A compositionally biased stretch (acidic residues) spans 3409–3428 (ATEIDSLDGYDLQDEDDGLT). Basic and acidic residues-rich tracts occupy residues 3465–3481 (EVIE…DKPP) and 3549–3575 (RGDD…EDRS). Residues 3576-3598 (PATTPDTTPARTPTDESTPTSEP) are compositionally biased toward low complexity. Residues 3637–3651 (HTSEGKSGDQGEGDK) show a composition bias toward basic and acidic residues. Polar residues-rich tracts occupy residues 3654–3669 (VTAT…TVET), 3676–3713 (ETPT…NTSK), 3880–3897 (HMSN…QSEK), and 4033–4052 (SRNT…VTTK). A compositionally biased stretch (basic and acidic residues) spans 4053 to 4076 (SARDKKTEAAPLKSKSEKAGSEKR). Positions 4090 to 4174 (TDIRMAIVAD…DIVTLLEGPI (85 aa)) constitute a Death domain. A phosphoserine mark is found at serine 4211 and serine 4229. Disordered regions lie at residues 4251–4298 (NGSH…EPAS) and 4323–4377 (PVSM…KSHS). Over residues 4268-4277 (PESQNDVGKQ) the composition is skewed to polar residues. Phosphoserine occurs at positions 4290 and 4298. The span at 4337 to 4347 (GKPRLSLHEEE) shows a compositional bias: basic and acidic residues. Serine 4350 carries the phosphoserine modification. A compositionally biased stretch (basic residues) spans 4362–4377 (VKTKKEIRHVEKKSHS).

Directly interacts with DMD and betaDAG1. This interaction does not interfere with binding between DMD and betaDAG1. It is also required for DMD and betaDAG1 retention at costameres. Interacts (via N-terminal ANK repeats) with SCHIP1 isoform 5 (via C-terminus); this interaction is required for the localization at axon initial segments (AISs) and nodes of Ranvier (NRs). May be a constituent of a NFASC/NRCAM/ankyrin G complex. Interacts with RHBG. Interacts with PLEC and FLNC. Interacts with KCNA1; this inhibits channel activity. Interacts (via ANK repeats) with IQCJ-SCHIP1; required for IQCJ-SCHIP1 localization at axon initial segments (AIS) and nodes of Ranvier. Interacts with SCHIP1. Interacts with SCN5A. Interacts with PKP2 and GJA1/CX43. As to expression, expressed in brain, neurons, muscles and other tissues.

It is found in the cytoplasm. Its subcellular location is the cytoskeleton. The protein resides in the cell projection. The protein localises to the axon. It localises to the cell membrane. It is found in the sarcolemma. Its subcellular location is the postsynaptic cell membrane. The protein resides in the lysosome. The protein localises to the T-tubule. It localises to the golgi apparatus. Functionally, membrane-cytoskeleton linker. May participate in the maintenance/targeting of ion channels and cell adhesion molecules at the nodes of Ranvier and axonal initial segments. In skeletal muscle, required for costamere localization of DMD and betaDAG1. Regulates KCNA1 channel activity in function of dietary Mg(2+) levels, and thereby contributes to the regulation of renal Mg(2+) reabsorption. Required for intracellular adhesion and junctional conductance in myocytes, potentially via stabilization of GJA1/CX43 protein abundance and promotion of PKP2, GJA1/CX43, and SCN5A/Nav1.5 localization to cell-cell junctions. May be part of a Golgi-specific membrane cytoskeleton in association with beta-spectrin. This Homo sapiens (Human) protein is Ankyrin-3.